Here is a 261-residue protein sequence, read N- to C-terminus: Bidirectional sugar transporter SWEET1b (261 aa).

Residues 1–6 (MEDLAK) lie on the Extracellular side of the membrane. The chain crosses the membrane as a helical span at residues 7-27 (FLFGVSGNVIALFLFLSPVPT). The MtN3/slv 1 domain occupies 7–95 (FLFGVSGNVI…VVFLVFASTH (89 aa)). Over 28–42 (FWRIIRRKSTEDFSG) the chain is Cytoplasmic. Residues 43–63 (VPYNMTLINCLLSAWYGLPFV) traverse the membrane as a helical segment. At 64–71 (SPNNILVS) the chain is on the extracellular side. Residues 72-92 (TINGAGAVIETAYVVVFLVFA) form a helical membrane-spanning segment. Topologically, residues 93–101 (STHKTRLRT) are cytoplasmic. A helical transmembrane segment spans residues 102 to 122 (LGLAAAVASVFAAVALVSLLA). The Extracellular segment spans residues 123-129 (LHGQHRK). A helical membrane pass occupies residues 130–150 (LLCGVAATVCSICMYASPLSI). Residues 133–215 (GVAATVCSIC…VLYAIYRNNK (83 aa)) enclose the MtN3/slv 2 domain. The Cytoplasmic portion of the chain corresponds to 151–164 (MRLVIKTKSVEYMP). Residues 165–185 (FLLSLAVFLCGTSWFIYGLLG) form a helical membrane-spanning segment. The Extracellular portion of the chain corresponds to 186–189 (RDPF). A helical membrane pass occupies residues 190-210 (VTIPNGCGSFLGAVQLVLYAI). Residues 211-261 (YRNNKGAGGGSGGKQAGDDDVEMAEGRNNKVADGGAAEDDSTAGGKAGTEV) lie on the Cytoplasmic side of the membrane. Positions 218 to 261 (GGGSGGKQAGDDDVEMAEGRNNKVADGGAAEDDSTAGGKAGTEV) are disordered.

Belongs to the SWEET sugar transporter family. In terms of assembly, forms homodimers.

It localises to the cell membrane. It carries out the reaction D-glucose(out) = D-glucose(in). The enzyme catalyses D-galactose(in) = D-galactose(out). Its function is as follows. Mediates transport of sugars across the plasma membrane. Can transport glucose and galactose, but not fructose, mannose and sucrose. This is Bidirectional sugar transporter SWEET1b (SWEET1B) from Oryza sativa subsp. indica (Rice).